Reading from the N-terminus, the 364-residue chain is tRNA 2-selenouridine synthase (364 aa).

Residues 14–137 (LIADTPIIDV…LRQAAIQATI (124 aa)) form the Rhodanese domain. The S-selanylcysteine intermediate role is filled by cysteine 97.

Belongs to the SelU family. In terms of assembly, monomer.

The catalysed reaction is 5-methylaminomethyl-2-thiouridine(34) in tRNA + selenophosphate + (2E)-geranyl diphosphate + H2O + H(+) = 5-methylaminomethyl-2-selenouridine(34) in tRNA + (2E)-thiogeraniol + phosphate + diphosphate. It carries out the reaction 5-methylaminomethyl-2-thiouridine(34) in tRNA + (2E)-geranyl diphosphate = 5-methylaminomethyl-S-(2E)-geranyl-thiouridine(34) in tRNA + diphosphate. The enzyme catalyses 5-methylaminomethyl-S-(2E)-geranyl-thiouridine(34) in tRNA + selenophosphate + H(+) = 5-methylaminomethyl-2-(Se-phospho)selenouridine(34) in tRNA + (2E)-thiogeraniol. It catalyses the reaction 5-methylaminomethyl-2-(Se-phospho)selenouridine(34) in tRNA + H2O = 5-methylaminomethyl-2-selenouridine(34) in tRNA + phosphate. Functionally, involved in the post-transcriptional modification of the uridine at the wobble position (U34) of tRNA(Lys), tRNA(Glu) and tRNA(Gln). Catalyzes the conversion of 2-thiouridine (S2U-RNA) to 2-selenouridine (Se2U-RNA). Acts in a two-step process involving geranylation of 2-thiouridine (S2U) to S-geranyl-2-thiouridine (geS2U) and subsequent selenation of the latter derivative to 2-selenouridine (Se2U) in the tRNA chain. The protein is tRNA 2-selenouridine synthase of Shigella sonnei (strain Ss046).